Here is a 141-residue protein sequence, read N- to C-terminus: Acetyltransferase ECA0875 (141 aa).

The region spanning 1-141 (MEIRIFRQDD…GKRLIEDREY (141 aa)) is the N-acetyltransferase domain.

The protein belongs to the acetyltransferase family. YpeA subfamily.

The polypeptide is Acetyltransferase ECA0875 (Pectobacterium atrosepticum (strain SCRI 1043 / ATCC BAA-672) (Erwinia carotovora subsp. atroseptica)).